Consider the following 150-residue polypeptide: Arginine repressor (150 aa).

Belongs to the ArgR family.

It localises to the cytoplasm. It participates in amino-acid biosynthesis; L-arginine biosynthesis [regulation]. Its function is as follows. Regulates arginine biosynthesis genes. The protein is Arginine repressor of Clostridium acetobutylicum (strain ATCC 824 / DSM 792 / JCM 1419 / IAM 19013 / LMG 5710 / NBRC 13948 / NRRL B-527 / VKM B-1787 / 2291 / W).